A 960-amino-acid polypeptide reads, in one-letter code: Chromo domain-containing protein 1 (960 aa).

In terms of domain architecture, Chromo spans 22 to 74 (YEVEDILADRVNKNGINEYYIKWAGYDWYDNTWEPEQNLFGAEKVLKKWKKRK).

As to quaternary structure, ago1, chp1 and tas3 interact to form the core of the RNA-induced transcriptional silencing (RITS) complex. The RITS complex interacts with the RDRC complex via interaction between ago1 and hrr1. Clr4 has a role in mediating this interaction. Interacts with dri1.

The protein localises to the nucleus. The protein resides in the cytoplasm. It localises to the cytoskeleton. Its subcellular location is the microtubule organizing center. It is found in the spindle pole body. In terms of biological role, component of the kinetochore which plays a role in stabilizing microtubules and so allowing accurate chromosome segregation. Has a role in the RNA interference (RNAi) pathway which is important for heterochromatin formation and accurate chromosome segregation. A member of the RNA-induced transcriptional silencing (RITS) complex which is involved in the biosynthesis of dsRNA from primer siRNAs provided by the RNA-directed RNA polymerase (RDRC) complex. This chain is Chromo domain-containing protein 1, found in Schizosaccharomyces pombe (strain 972 / ATCC 24843) (Fission yeast).